Consider the following 258-residue polypeptide: Tryptophan synthase alpha chain (258 aa).

Catalysis depends on proton acceptor residues glutamate 47 and aspartate 58.

Belongs to the TrpA family. As to quaternary structure, tetramer of two alpha and two beta chains.

The enzyme catalyses (1S,2R)-1-C-(indol-3-yl)glycerol 3-phosphate + L-serine = D-glyceraldehyde 3-phosphate + L-tryptophan + H2O. Its pathway is amino-acid biosynthesis; L-tryptophan biosynthesis; L-tryptophan from chorismate: step 5/5. Functionally, the alpha subunit is responsible for the aldol cleavage of indoleglycerol phosphate to indole and glyceraldehyde 3-phosphate. This is Tryptophan synthase alpha chain from Bacillus cereus (strain B4264).